The sequence spans 117 residues: Prefoldin subunit beta (117 aa).

The protein belongs to the prefoldin subunit beta family. In terms of assembly, heterohexamer of two alpha and four beta subunits.

It is found in the cytoplasm. Functionally, molecular chaperone capable of stabilizing a range of proteins. Seems to fulfill an ATP-independent, HSP70-like function in archaeal de novo protein folding. The sequence is that of Prefoldin subunit beta from Thermococcus kodakarensis (strain ATCC BAA-918 / JCM 12380 / KOD1) (Pyrococcus kodakaraensis (strain KOD1)).